Here is a 154-residue protein sequence, read N- to C-terminus: 3-hydroxyacyl-[acyl-carrier-protein] dehydratase FabZ (154 aa).

The active site involves His55.

Belongs to the thioester dehydratase family. FabZ subfamily.

The protein resides in the cytoplasm. The enzyme catalyses a (3R)-hydroxyacyl-[ACP] = a (2E)-enoyl-[ACP] + H2O. Involved in unsaturated fatty acids biosynthesis. Catalyzes the dehydration of short chain beta-hydroxyacyl-ACPs and long chain saturated and unsaturated beta-hydroxyacyl-ACPs. The sequence is that of 3-hydroxyacyl-[acyl-carrier-protein] dehydratase FabZ from Nitratidesulfovibrio vulgaris (strain DSM 19637 / Miyazaki F) (Desulfovibrio vulgaris).